The following is a 384-amino-acid chain: Glutamate 5-kinase (384 aa).

Position 24 (lysine 24) interacts with ATP. Positions 64, 149, and 161 each coordinate substrate. ATP-binding positions include 181–182 (TD) and 223–229 (TGGMRTK). Positions 288 to 370 (PGAILIDAGA…RDIQPLLGYT (83 aa)) constitute a PUA domain.

This sequence belongs to the glutamate 5-kinase family.

It is found in the cytoplasm. The catalysed reaction is L-glutamate + ATP = L-glutamyl 5-phosphate + ADP. It participates in amino-acid biosynthesis; L-proline biosynthesis; L-glutamate 5-semialdehyde from L-glutamate: step 1/2. Catalyzes the transfer of a phosphate group to glutamate to form L-glutamate 5-phosphate. The protein is Glutamate 5-kinase of Xylella fastidiosa (strain 9a5c).